A 184-amino-acid polypeptide reads, in one-letter code: Non-fimbrial adhesin 1 (184 aa).

An N-terminal signal peptide occupies residues 1 to 28 (MKAKKYENQIYNENGRRCQRHGRRLAIA). A disulfide bridge connects residues cysteine 57 and cysteine 91.

As to quaternary structure, forms a polymeric structure, which disintegrates with elevated temperature into a monomer but with some relatively stable dimers.

The chain is Non-fimbrial adhesin 1 (nfaA) from Escherichia coli.